The chain runs to 122 residues: MKRVLNLGNLSRIVEGDPNEITDDEILVIKDKIIEGKIIDIQKRVDGKLVSLITEKYTYTINPTPADAIVVINGSTTKSIRAAKGHTVTWSVSKTGFVTQSGSDVISGDVSKDVTLVANPAS.

In terms of assembly, homodimer. Interacts with the major capsid protein.

The protein localises to the virion. Functionally, forms short fibers at the surface of the viral capsid. This chain is Head fiber dimeric protein, found in Bacteroides intestinalis (Bacteroides phage PhiCrAss001).